A 129-amino-acid chain; its full sequence is L-ectoine synthase (129 aa).

The protein belongs to the ectoine synthase family.

It catalyses the reaction (2S)-4-acetamido-2-aminobutanoate = L-ectoine + H2O. Its pathway is amine and polyamine biosynthesis; ectoine biosynthesis; L-ectoine from L-aspartate 4-semialdehyde: step 3/3. Its function is as follows. Catalyzes the circularization of gamma-N-acetyl-alpha,gamma-diaminobutyric acid (ADABA) to ectoine (1,4,5,6-tetrahydro-2-methyl-4-pyrimidine carboxylic acid), which is an excellent osmoprotectant. The sequence is that of L-ectoine synthase from Mycobacterium sp. (strain KMS).